The chain runs to 335 residues: Ketol-acid reductoisomerase (NADP(+)) 2 (335 aa).

Residues 1-180 enclose the KARI N-terminal Rossmann domain; it reads MKTYYEKDAN…GCTRAGVIET (180 aa). NADP(+)-binding positions include 24 to 27, Arg47, Ser51, and 81 to 84; these read YGSQ and DEQQ. The active site involves His106. Residue Gly132 coordinates NADP(+). Residues 181-326 form the KARI C-terminal knotted domain; the sequence is TFQEETETDL…AELREMMSWI (146 aa). Residues Asp189, Glu193, Glu225, and Glu229 each coordinate Mg(2+). Position 250 (Ser250) interacts with substrate.

The protein belongs to the ketol-acid reductoisomerase family. Mg(2+) is required as a cofactor.

It carries out the reaction (2R)-2,3-dihydroxy-3-methylbutanoate + NADP(+) = (2S)-2-acetolactate + NADPH + H(+). The enzyme catalyses (2R,3R)-2,3-dihydroxy-3-methylpentanoate + NADP(+) = (S)-2-ethyl-2-hydroxy-3-oxobutanoate + NADPH + H(+). It functions in the pathway amino-acid biosynthesis; L-isoleucine biosynthesis; L-isoleucine from 2-oxobutanoate: step 2/4. The protein operates within amino-acid biosynthesis; L-valine biosynthesis; L-valine from pyruvate: step 2/4. Functionally, involved in the biosynthesis of branched-chain amino acids (BCAA). Catalyzes an alkyl-migration followed by a ketol-acid reduction of (S)-2-acetolactate (S2AL) to yield (R)-2,3-dihydroxy-isovalerate. In the isomerase reaction, S2AL is rearranged via a Mg-dependent methyl migration to produce 3-hydroxy-3-methyl-2-ketobutyrate (HMKB). In the reductase reaction, this 2-ketoacid undergoes a metal-dependent reduction by NADPH to yield (R)-2,3-dihydroxy-isovalerate. The protein is Ketol-acid reductoisomerase (NADP(+)) 2 of Bacillus cereus (strain ZK / E33L).